Here is a 160-residue protein sequence, read N- to C-terminus: G-protein-signaling modulator 3 (160 aa).

Positions 1-55 (MEAERPQEEEDGEQGPPQDEEGWPPPNSTTRPWRSAPPSPPPPGTRHTALGPRSA) are disordered. The span at 7–22 (QEEEDGEQGPPQDEEG) shows a compositional bias: acidic residues. Phosphoserine occurs at positions 35, 39, 56, and 59. Residues 35 to 44 (SAPPSPPPPG) show a composition bias toward pro residues. T62 is subject to Phosphothreonine. GoLoco domains are found at residues 62–84 (TELLLDLVAEAQSRRLEEQRATF), 104–126 (REQLYSTILSHQCQRMEAQRSEP), and 132–155 (GQELLELLLRVQGGGRMEEQRSRP).

Expressed in heart, placenta, lung and liver.

The protein resides in the cytoplasm. Functionally, interacts with subunit of G(i) alpha proteins and regulates the activation of G(i) alpha proteins. The sequence is that of G-protein-signaling modulator 3 (GPSM3) from Homo sapiens (Human).